Reading from the N-terminus, the 2035-residue chain is Ral GTPase-activating protein subunit alpha-1 (2035 aa).

Disordered regions lie at residues 343–384 and 477–496; these read LVSR…SSLC and DGEK…VRNS. Basic and acidic residues predominate over residues 345–365; sequence SREESKNDTVDKVDKSAEPEQ. Composition is skewed to polar residues over residues 366–384 and 486–496; these read SHSN…SSLC and GTSTSEHVRNS. Ser-710 and Ser-720 each carry phosphoserine. Residues 714–752 form a disordered region; the sequence is SFSRGWSRDQPGQAPMRQRSATTTGSPGTEKARSIVRQK. Position 753 is a phosphothreonine (Thr-753). Ser-772 carries the phosphoserine modification. Thr-777 bears the Phosphothreonine mark. Phosphoserine is present on Ser-796. A compositionally biased stretch (basic and acidic residues) spans 807–817; the sequence is ERAKVNKEDTS. Disordered regions lie at residues 807 to 834 and 848 to 911; these read ERAK…SANV and SGNA…SHSD. Polar residues-rich tracts occupy residues 824-833 and 849-862; these read NSETGGNSAN and GNAS…SSPG. Phosphoserine is present on residues Ser-859, Ser-860, and Ser-863. Over residues 894-911 the composition is skewed to low complexity; sequence SPASAGSSDLMSSDSHSD. Phosphoserine is present on residues Ser-985, Ser-989, Ser-993, and Ser-999. A compositionally biased stretch (polar residues) spans 986–1008; it reads ESASPVHSALGSRSQTPSPSTLS. The interval 986–1011 is disordered; it reads ESASPVHSALGSRSQTPSPSTLSRAH. Phosphothreonine is present on Thr-1001. 2 positions are modified to phosphoserine: Ser-1003 and Ser-1477. The interval 1326-2035 is minimal domain that binds to TCF3/E12; that stretch reads FTNKTVAHVA…YHHFPADADH (710 aa). Positions 1713-1748 form a coiled coil; it reads SEKQENDVINAILKQYTEEKEFVEKHFNDLNMKASE. In terms of domain architecture, Rap-GAP spans 1795–2003; it reads LRNLDSRQCR…EERARYLQTI (209 aa).

Component of the heterodimeric RalGAP1 complex with RALGAPB. Heterodimerization is required for activity. Interacts with the HLH region of TCF3/isoform E12. As to expression, expressed during embryogenesis. Expressed in the adult brain, particularly in neurons of the cortex and hippocampus.

The protein resides in the cytoplasm. Its subcellular location is the nucleus. In terms of biological role, catalytic subunit of the heterodimeric RalGAP1 complex which acts as a GTPase activator for the Ras-like small GTPases RALA and RALB. May interact with the HLH region of TCF3/isoform E12. This is Ral GTPase-activating protein subunit alpha-1 (Ralgapa1) from Mus musculus (Mouse).